The following is a 230-amino-acid chain: UPF0702 transmembrane protein YcaP (230 aa).

3 consecutive transmembrane segments (helical) span residues 16–36 (FDFLGEVALRSLYTFVLVFLF), 48–68 (MSLFEVLIILTLGSAAGDVAF), and 75–95 (VPVLIVFITLALLYRLVMWLM).

The protein belongs to the UPF0702 family.

The protein localises to the cell membrane. This chain is UPF0702 transmembrane protein YcaP (ycaP), found in Escherichia coli (strain K12).